Reading from the N-terminus, the 339-residue chain is DNA-directed RNA polymerase subunit alpha (339 aa).

Positions methionine 1 to glutamate 233 are alpha N-terminal domain (alpha-NTD). The interval lysine 264 to phenylalanine 339 is alpha C-terminal domain (alpha-CTD).

It belongs to the RNA polymerase alpha chain family. In terms of assembly, in plastids the minimal PEP RNA polymerase catalytic core is composed of four subunits: alpha, beta, beta', and beta''. When a (nuclear-encoded) sigma factor is associated with the core the holoenzyme is formed, which can initiate transcription.

The protein localises to the plastid. The protein resides in the chloroplast. It catalyses the reaction RNA(n) + a ribonucleoside 5'-triphosphate = RNA(n+1) + diphosphate. DNA-dependent RNA polymerase catalyzes the transcription of DNA into RNA using the four ribonucleoside triphosphates as substrates. This chain is DNA-directed RNA polymerase subunit alpha, found in Eremopyrum distans.